The chain runs to 612 residues: Threonine--tRNA ligase (612 aa).

The segment at 218-509 is catalytic; the sequence is NHRKLGVELG…LSEHFGGNFP (292 aa). Zn(2+) contacts are provided by Cys-310, His-361, and His-486.

The protein belongs to the class-II aminoacyl-tRNA synthetase family. As to quaternary structure, homodimer. Zn(2+) is required as a cofactor.

Its subcellular location is the cytoplasm. It carries out the reaction tRNA(Thr) + L-threonine + ATP = L-threonyl-tRNA(Thr) + AMP + diphosphate + H(+). Functionally, catalyzes the attachment of threonine to tRNA(Thr) in a two-step reaction: L-threonine is first activated by ATP to form Thr-AMP and then transferred to the acceptor end of tRNA(Thr). Also edits incorrectly charged L-seryl-tRNA(Thr). This is Threonine--tRNA ligase from Helicobacter pylori (strain Shi470).